The following is a 685-amino-acid chain: E3 ubiquitin-protein ligase RNF103 (685 aa).

4 consecutive transmembrane segments (helical) span residues 6-26 (FFLL…EAIV), 326-346 (LFVL…FITQ), 366-386 (LLII…LDSF), and 411-431 (MFYS…GLLI). The span at 526–543 (EEMSEGSQDTENDSESEN) shows a compositional bias: acidic residues. The interval 526 to 550 (EEMSEGSQDTENDSESENTDTLSSE) is disordered. The RING-type zinc finger occupies 621–663 (CVVCLENFENGCLLMGLPCGHVFHQNCIVMWLAGGRHCCPVCR).

As to quaternary structure, interacts with DERL1 and VCP. As to expression, highly expressed in the normal cerebellum but not in the cerebral cortex.

It is found in the endoplasmic reticulum membrane. The enzyme catalyses S-ubiquitinyl-[E2 ubiquitin-conjugating enzyme]-L-cysteine + [acceptor protein]-L-lysine = [E2 ubiquitin-conjugating enzyme]-L-cysteine + N(6)-ubiquitinyl-[acceptor protein]-L-lysine.. The protein operates within protein modification; protein ubiquitination. Acts as an E2-dependent E3 ubiquitin-protein ligase, probably involved in the ER-associated protein degradation pathway. In Homo sapiens (Human), this protein is E3 ubiquitin-protein ligase RNF103 (RNF103).